Here is a 381-residue protein sequence, read N- to C-terminus: tRNA-specific 2-thiouridylase MnmA (381 aa).

ATP contacts are provided by residues 9–16 (GMSGGVDS) and Met35. Positions 95-97 (NPD) are interaction with target base in tRNA. Cys100 serves as the catalytic Nucleophile. Cys100 and Cys196 are joined by a disulfide. An ATP-binding site is contributed by Gly124. Positions 146-148 (KDQ) are interaction with tRNA. Residue Cys196 is the Cysteine persulfide intermediate of the active site. The tract at residues 308–309 (RY) is interaction with tRNA.

The protein belongs to the MnmA/TRMU family.

Its subcellular location is the cytoplasm. It carries out the reaction S-sulfanyl-L-cysteinyl-[protein] + uridine(34) in tRNA + AH2 + ATP = 2-thiouridine(34) in tRNA + L-cysteinyl-[protein] + A + AMP + diphosphate + H(+). Its function is as follows. Catalyzes the 2-thiolation of uridine at the wobble position (U34) of tRNA, leading to the formation of s(2)U34. The sequence is that of tRNA-specific 2-thiouridylase MnmA from Paraburkholderia xenovorans (strain LB400).